The sequence spans 428 residues: S-adenosylmethionine synthase (428 aa).

Residue His-14 participates in ATP binding. Position 16 (Asp-16) interacts with Mg(2+). Glu-42 is a binding site for K(+). L-methionine-binding residues include Glu-55 and Gln-98. Residues 98–108 (QSGDINRGVER) are flexible loop. ATP is bound by residues 165–167 (DAK), 251–252 (KF), Asp-260, 266–267 (RK), Ala-283, and Lys-287. Asp-260 serves as a coordination point for L-methionine. Lys-291 serves as a coordination point for L-methionine.

It belongs to the AdoMet synthase family. In terms of assembly, homotetramer; dimer of dimers. Requires Mg(2+) as cofactor. K(+) is required as a cofactor.

Its subcellular location is the cytoplasm. It carries out the reaction L-methionine + ATP + H2O = S-adenosyl-L-methionine + phosphate + diphosphate. It participates in amino-acid biosynthesis; S-adenosyl-L-methionine biosynthesis; S-adenosyl-L-methionine from L-methionine: step 1/1. In terms of biological role, catalyzes the formation of S-adenosylmethionine (AdoMet) from methionine and ATP. The overall synthetic reaction is composed of two sequential steps, AdoMet formation and the subsequent tripolyphosphate hydrolysis which occurs prior to release of AdoMet from the enzyme. The chain is S-adenosylmethionine synthase from Parabacteroides distasonis (strain ATCC 8503 / DSM 20701 / CIP 104284 / JCM 5825 / NCTC 11152).